Reading from the N-terminus, the 361-residue chain is N-methyltransferase benX (361 aa).

It belongs to the methyltransferase superfamily.

Its pathway is secondary metabolite biosynthesis. Its function is as follows. N-methyltransferase; part of the gene cluster that mediates the biosynthesis of benzomalvin A and D. The pathway begins with the loading of amino acid precursors onto the A domains of the non ribosomal peptide synthetases benY and benZ. BenY and the A1 domain of benZ are loaded with anthranilate (Anth), while the A2 domain of benZ is loaded with phenylalanine (Phe). N-methylation of Phe by the methyltransferase benX may happen before loading of Phe onto benZ, after loading of Phe, or after dipeptide formation. Condensation of Anth with the secondary amine of NmPhe or Phe is catalyzed by the C1 domain of benZ, forming a dipeptide intermediate. This is followed by in trans condensation of the Anth-NmPhe dipeptide with Anth bound to the T domain of benY by the C2 domain of benZ to form the linear tripeptide Anth-NmPhe-Anth. Cyclization and release of the tripeptide is then catalyzed by the C-terminal C domain of benY and the resulting 11-member macrocyclic intermediate is expected to spontaneously collapse to form the benzodiazepine core. Benzomalvin A is in conformational equilibrium with its atropisomer, benzomalvin D. The protein is N-methyltransferase benX of Aspergillus terreus.